Here is a 289-residue protein sequence, read N- to C-terminus: Xylosylprotein 4-beta-galactosyltransferase (289 aa).

The Cytoplasmic segment spans residues 1–6 (MKLKTR). The helical; Signal-anchor for type II membrane protein transmembrane segment at 7 to 27 (LILSGTILISLAACYFLVLLV) threads the bilayer. Residues 28–289 (LDLEITRDLM…DLNWTPYCKS (262 aa)) are Lumenal-facing. Position 58–62 (58–62 (PYRDR)) interacts with UDP-alpha-D-galactose. N-linked (GlcNAc...) asparagine glycosylation is found at Asn-81 and Asn-90. UDP-alpha-D-galactose is bound by residues 97-99 (FNR), 123-124 (VD), Tyr-154, and Trp-184. Asp-124 is a Mn(2+) binding site. 186-189 (LEDD) lines the N-acetyl-D-glucosamine pocket. Asn-201 is a glycosylation site (N-linked (GlcNAc...) asparagine). The tract at residues 214–236 (NTFRHIHGPKRKRDYTPKKNDKN) is disordered. Basic residues predominate over residues 217 to 226 (RHIHGPKRKR). Position 218 (His-218) interacts with Mn(2+). 218 to 220 (HIH) contacts UDP-alpha-D-galactose. The span at 227–236 (DYTPKKNDKN) shows a compositional bias: basic and acidic residues.

The protein belongs to the glycosyltransferase 7 family. It depends on Mn(2+) as a cofactor.

Its subcellular location is the membrane. The catalysed reaction is 3-O-(beta-D-xylosyl)-L-seryl-[protein] + UDP-alpha-D-galactose = 3-O-(beta-D-galactosyl-(1-&gt;4)-beta-D-xylosyl)-L-seryl-[protein] + UDP + H(+). Its pathway is protein modification; protein glycosylation. Its function is as follows. Glycosyltransferase required for the biosynthesis of the tetrasaccharide (GlcA-Gal-Gal-Xyl-)Ser core linker of heparan sulfate and chondroitin sulfate. Required for embryonic development. Involved in vulval epithelium invagination. Required for axon regeneration after injury. This Caenorhabditis elegans protein is Xylosylprotein 4-beta-galactosyltransferase (sqv-3).